Here is a 161-residue protein sequence, read N- to C-terminus: Ribonuclease H (161 aa).

Positions Glu5–Lys149 constitute an RNase H type-1 domain. Residues Asp14, Glu53, Asp78, and Asp141 each contribute to the Mg(2+) site.

This sequence belongs to the RNase H family. Monomer. Mg(2+) is required as a cofactor.

It is found in the cytoplasm. The catalysed reaction is Endonucleolytic cleavage to 5'-phosphomonoester.. In terms of biological role, endonuclease that specifically degrades the RNA of RNA-DNA hybrids. The chain is Ribonuclease H from Prochlorococcus marinus (strain NATL1A).